The primary structure comprises 561 residues: Dihydroxy-acid dehydratase (561 aa).

Cys50 serves as a coordination point for [2Fe-2S] cluster. Residue Asp82 participates in Mg(2+) binding. Residue Cys123 participates in [2Fe-2S] cluster binding. Mg(2+)-binding residues include Asp124 and Lys125. Lys125 carries the post-translational modification N6-carboxylysine. Cys195 provides a ligand contact to [2Fe-2S] cluster. Glu447 contributes to the Mg(2+) binding site. Residue Ser473 is the Proton acceptor of the active site.

This sequence belongs to the IlvD/Edd family. Homodimer. It depends on [2Fe-2S] cluster as a cofactor. Mg(2+) is required as a cofactor.

The catalysed reaction is (2R)-2,3-dihydroxy-3-methylbutanoate = 3-methyl-2-oxobutanoate + H2O. It catalyses the reaction (2R,3R)-2,3-dihydroxy-3-methylpentanoate = (S)-3-methyl-2-oxopentanoate + H2O. It participates in amino-acid biosynthesis; L-isoleucine biosynthesis; L-isoleucine from 2-oxobutanoate: step 3/4. Its pathway is amino-acid biosynthesis; L-valine biosynthesis; L-valine from pyruvate: step 3/4. Functionally, functions in the biosynthesis of branched-chain amino acids. Catalyzes the dehydration of (2R,3R)-2,3-dihydroxy-3-methylpentanoate (2,3-dihydroxy-3-methylvalerate) into 2-oxo-3-methylpentanoate (2-oxo-3-methylvalerate) and of (2R)-2,3-dihydroxy-3-methylbutanoate (2,3-dihydroxyisovalerate) into 2-oxo-3-methylbutanoate (2-oxoisovalerate), the penultimate precursor to L-isoleucine and L-valine, respectively. The protein is Dihydroxy-acid dehydratase of Crocosphaera subtropica (strain ATCC 51142 / BH68) (Cyanothece sp. (strain ATCC 51142)).